Here is a 221-residue protein sequence, read N- to C-terminus: Ependymin-1 (221 aa).

Residues Met1 to Ala21 form the signal peptide. Asn33, Asn73, and Asn97 each carry an N-linked (GlcNAc...) asparagine glycan.

Belongs to the ependymin family. In terms of processing, binds calcium through the terminal sialic acids. In terms of tissue distribution, EPDs are synthesized in the meninx and secreted in the cerebrospinal fluid.

Its subcellular location is the secreted. May play a role in neural plasticity. May be involved during axon regeneration. This Oncorhynchus mykiss (Rainbow trout) protein is Ependymin-1 (epd1).